Reading from the N-terminus, the 445-residue chain is 3-phosphoshikimate 1-carboxyvinyltransferase (445 aa).

Lys-28, Ser-29, and Arg-33 together coordinate 3-phosphoshikimate. Position 28 (Lys-28) interacts with phosphoenolpyruvate. Phosphoenolpyruvate-binding residues include Gly-101 and Arg-129. Residues Ser-175, Gln-177, Asp-328, and Lys-355 each coordinate 3-phosphoshikimate. Phosphoenolpyruvate is bound at residue Gln-177. The active-site Proton acceptor is Asp-328. Arg-359 and Arg-402 together coordinate phosphoenolpyruvate.

This sequence belongs to the EPSP synthase family. Monomer.

The protein localises to the cytoplasm. The catalysed reaction is 3-phosphoshikimate + phosphoenolpyruvate = 5-O-(1-carboxyvinyl)-3-phosphoshikimate + phosphate. It functions in the pathway metabolic intermediate biosynthesis; chorismate biosynthesis; chorismate from D-erythrose 4-phosphate and phosphoenolpyruvate: step 6/7. Functionally, catalyzes the transfer of the enolpyruvyl moiety of phosphoenolpyruvate (PEP) to the 5-hydroxyl of shikimate-3-phosphate (S3P) to produce enolpyruvyl shikimate-3-phosphate and inorganic phosphate. The protein is 3-phosphoshikimate 1-carboxyvinyltransferase of Rhodopseudomonas palustris (strain HaA2).